Reading from the N-terminus, the 316-residue chain is 2,3-dihydroxyphenylpropionate/2,3-dihydroxicinnamic acid 1,2-dioxygenase (316 aa).

The active-site Proton donor is His-118. His-182 functions as the Proton acceptor in the catalytic mechanism.

The protein belongs to the LigB/MhpB extradiol dioxygenase family. As to quaternary structure, homotetramer. The cofactor is Fe(2+).

The enzyme catalyses 3-(2,3-dihydroxyphenyl)propanoate + O2 = (2Z,4E)-2-hydroxy-6-oxonona-2,4-dienedioate + H(+). It catalyses the reaction (2E)-3-(2,3-dihydroxyphenyl)prop-2-enoate + O2 = (2Z,4E,7E)-2-hydroxy-6-oxonona-2,4,7-trienedioate + H(+). It participates in aromatic compound metabolism; 3-phenylpropanoate degradation. Its function is as follows. Catalyzes the non-heme iron(II)-dependent oxidative cleavage of 2,3-dihydroxyphenylpropionic acid and 2,3-dihydroxicinnamic acid into 2-hydroxy-6-ketononadienedioate and 2-hydroxy-6-ketononatrienedioate, respectively. This Mycolicibacterium vanbaalenii (strain DSM 7251 / JCM 13017 / BCRC 16820 / KCTC 9966 / NRRL B-24157 / PYR-1) (Mycobacterium vanbaalenii) protein is 2,3-dihydroxyphenylpropionate/2,3-dihydroxicinnamic acid 1,2-dioxygenase.